A 115-amino-acid polypeptide reads, in one-letter code: Large ribosomal subunit protein bL20 (115 aa).

The protein belongs to the bacterial ribosomal protein bL20 family.

In terms of biological role, binds directly to 23S ribosomal RNA and is necessary for the in vitro assembly process of the 50S ribosomal subunit. It is not involved in the protein synthesizing functions of that subunit. The chain is Large ribosomal subunit protein bL20 from Prochlorococcus marinus (strain AS9601).